The primary structure comprises 605 residues: Probable potassium transport system protein Kup 1 (605 aa).

12 consecutive transmembrane segments (helical) span residues 16-36 (ALGL…TVIF), 46-66 (VFGI…MEYA), 97-117 (VAFA…DGVI), 138-158 (GLST…LFSV), 166-186 (VAGA…VTGV), 212-232 (GLAG…GEAL), 248-268 (WYFV…FAIT), 287-307 (LYIP…QSII), 339-359 (IYLG…MLLF), 368-388 (AYGM…IIVF), 397-417 (ALVA…TFSK), and 418-438 (IPHG…TIII).

This sequence belongs to the HAK/KUP transporter (TC 2.A.72) family.

The protein resides in the cell inner membrane. The enzyme catalyses K(+)(in) + H(+)(in) = K(+)(out) + H(+)(out). In terms of biological role, transport of potassium into the cell. Likely operates as a K(+):H(+) symporter. The polypeptide is Probable potassium transport system protein Kup 1 (Geobacter metallireducens (strain ATCC 53774 / DSM 7210 / GS-15)).